Consider the following 113-residue polypeptide: Dynein light chain Tctex-type 1 (113 aa).

Residue M1 is modified to N-acetylmethionine. Residues 41–113 (QWTTNVLEQT…CIVSTFGLSI (73 aa)) form an interaction with GNB1 region.

The protein belongs to the dynein light chain Tctex-type family. In terms of assembly, homodimer. The cytoplasmic dynein 1 complex consists of two catalytic heavy chains (HCs) and a number of non-catalytic subunits presented by intermediate chains (ICs), light intermediate chains (LICs) and light chains (LCs); the composition seems to vary in respect to the IC, LIC and LC composition. The heavy chain homodimer serves as a scaffold for the probable homodimeric assembly of the respective non-catalytic subunits. The ICs and LICs bind directly to the HC dimer and the LCs assemble on the IC dimer. DYNLT1 and DYNLT3 compete for association with dynein IC (DYNC1I1 or DYNC1I2). Self-associates. Interacts with RHO. Interacts with DYNC1I1 and DYNC1I2. Interacts with DOC2A, DOC2B and SCN10A. Interacts with PVR. Interacts with SVIL isoform 2. Interacts with GNB1; the interaction occurs in presence of guanine nucleotide-binding protein G(T) subunit gamma; the interaction diminishes the association of DYNLT1 with dynein IC (DYNC1I1 or DYNC1I2). Interacts with GNB2, GNB3 and GNB5; the interactions occur in presence of guanine nucleotide-binding protein G(T) subunit gamma. Interacts with ACVR2B and ARHGEF2. Interacts with DNAI4. Interacts with CFAP61. In terms of processing, phosphorylated by BMPR2. The phosphorylation status is proposed to regulate the association with the cytoplasmic dynein complex and may have role in cytoplasmic dynein cargo release. As to expression, high level in testis (germ cell-specific). Expressed in sperm (at protein level). 200-fold lower in liver, brain, heart, spleen, and kidney. Levels in thymus and two embryonal carcinoma cell lines were several-fold higher than this low constitutive level.

The protein localises to the golgi apparatus. The protein resides in the cytoplasm. It is found in the cytoskeleton. It localises to the spindle. Its function is as follows. Acts as one of several non-catalytic accessory components of the cytoplasmic dynein 1 complex that are thought to be involved in linking dynein to cargos and to adapter proteins that regulate dynein function. Cytoplasmic dynein 1 acts as a motor for the intracellular retrograde motility of vesicles and organelles along microtubules. Binds to transport cargos and is involved in apical cargo transport such as rhodopsin-bearing vesicles in polarized epithelia. May also be a accessory component of axonemal dynein. Plays an important role in male germ cell development and function. Candidate for involvement in male sterility. Functionally, plays a role in neuronal morphogenesis; the function is independent of cytoplasmic dynein and seems to be coupled to regulation of the actin cytoskeleton by enhancing Rac1 activity. The function in neurogenesis may be regulated by association with a G-protein beta-gamma dimer. May function as a receptor-independent activator of heterotrimeric G-protein signaling; the activation appears to be independent of a nucleotide exchange. Plays a role in regulating neurogenesis; inhibits the genesis of neurons from precursor cells during cortical development presumably by antagonizing ARHGEF2. Unrelated to the role in retrograde microtubule-associated movement may play a role in the dimerization of cytoplasmic proteins/domains such as for ACVR2B. Binds to the cytoplasmic domain of ACVR2B and, in vitro, inhibits ACVR2B signaling. Involved in the regulation of mitotic spindle orientation. The protein is Dynein light chain Tctex-type 1 (Dynlt1) of Mus musculus (Mouse).